Reading from the N-terminus, the 938-residue chain is Isoleucine--tRNA ligase (938 aa).

Positions 58 to 68 (PYANGSIHIGH) match the 'HIGH' region motif. Residue Glu561 participates in L-isoleucyl-5'-AMP binding. A 'KMSKS' region motif is present at residues 602-606 (KMSKS). Lys605 lines the ATP pocket. Zn(2+)-binding residues include Cys901, Cys904, Cys921, and Cys924.

Belongs to the class-I aminoacyl-tRNA synthetase family. IleS type 1 subfamily. As to quaternary structure, monomer. Zn(2+) is required as a cofactor.

It localises to the cytoplasm. The enzyme catalyses tRNA(Ile) + L-isoleucine + ATP = L-isoleucyl-tRNA(Ile) + AMP + diphosphate. Its function is as follows. Catalyzes the attachment of isoleucine to tRNA(Ile). As IleRS can inadvertently accommodate and process structurally similar amino acids such as valine, to avoid such errors it has two additional distinct tRNA(Ile)-dependent editing activities. One activity is designated as 'pretransfer' editing and involves the hydrolysis of activated Val-AMP. The other activity is designated 'posttransfer' editing and involves deacylation of mischarged Val-tRNA(Ile). The chain is Isoleucine--tRNA ligase from Citrobacter koseri (strain ATCC BAA-895 / CDC 4225-83 / SGSC4696).